A 410-amino-acid chain; its full sequence is Structure-specific endonuclease subunit SLX1 homolog (410 aa).

Positions 6–89 (QLHYCYFLLS…NICKVTRDNI (84 aa)) constitute a GIY-YIG domain.

The protein belongs to the SLX1 family. As to quaternary structure, forms a heterodimer with a member of the SLX4 family. The cofactor is a divalent metal cation.

The protein resides in the nucleus. Catalytic subunit of a heterodimeric structure-specific endonuclease that resolves DNA secondary structures generated during DNA repair and recombination. Has endonuclease activity towards branched DNA substrates, introducing single-strand cuts in duplex DNA close to junctions with ss-DNA. The polypeptide is Structure-specific endonuclease subunit SLX1 homolog (Cryptosporidium parvum (strain Iowa II)).